A 1373-amino-acid chain; its full sequence is DNA-directed RNA polymerase subunit beta'' (1373 aa).

The Zn(2+) site is built by cysteine 224, cysteine 296, cysteine 303, and cysteine 306.

Belongs to the RNA polymerase beta' chain family. RpoC2 subfamily. In terms of assembly, in plastids the minimal PEP RNA polymerase catalytic core is composed of four subunits: alpha, beta, beta', and beta''. When a (nuclear-encoded) sigma factor is associated with the core the holoenzyme is formed, which can initiate transcription. It depends on Zn(2+) as a cofactor.

The protein resides in the plastid. Its subcellular location is the chloroplast. It catalyses the reaction RNA(n) + a ribonucleoside 5'-triphosphate = RNA(n+1) + diphosphate. In terms of biological role, DNA-dependent RNA polymerase catalyzes the transcription of DNA into RNA using the four ribonucleoside triphosphates as substrates. The protein is DNA-directed RNA polymerase subunit beta'' of Amborella trichopoda.